Reading from the N-terminus, the 330-residue chain is Tryptophan--tRNA ligase (330 aa).

Residues Q10–S12 and G18–N19 each bind ATP. Residues P11–N19 carry the 'HIGH' region motif. D133 provides a ligand contact to L-tryptophan. Residues G145–D147, I184, and K193–S197 each bind ATP. The 'KMSKS' region signature appears at K193 to S197.

Belongs to the class-I aminoacyl-tRNA synthetase family. As to quaternary structure, homodimer.

The protein localises to the cytoplasm. It carries out the reaction tRNA(Trp) + L-tryptophan + ATP = L-tryptophyl-tRNA(Trp) + AMP + diphosphate + H(+). Functionally, catalyzes the attachment of tryptophan to tRNA(Trp). The polypeptide is Tryptophan--tRNA ligase (Bacillus subtilis (strain 168)).